A 691-amino-acid chain; its full sequence is Zinc finger protein 770 (691 aa).

Residue Lys-11 forms a Glycyl lysine isopeptide (Lys-Gly) (interchain with G-Cter in SUMO2) linkage. 3 consecutive C2H2-type zinc fingers follow at residues 27 to 49 (YVCN…YLIH), 55 to 77 (FECD…QLTH), and 81 to 103 (FKCS…QQLH). Glycyl lysine isopeptide (Lys-Gly) (interchain with G-Cter in SUMO2) cross-links involve residues Lys-112, Lys-121, and Lys-146. 3 C2H2-type zinc fingers span residues 160-182 (HACT…VLIH), 188-210 (FKCV…QLTH), and 216-238 (FQCC…KQIH). The tract at residues 258 to 277 (PLPNKLNANQGGFENGEIGE) is disordered. Residue Lys-262 forms a Glycyl lysine isopeptide (Lys-Gly) (interchain with G-Cter in SUMO2) linkage. The C2H2-type 7; degenerate zinc-finger motif lies at 294 to 318 (FQCPKCEKCFESEQILNEHSCFAAR). Residues Lys-420 and Lys-437 each participate in a glycyl lysine isopeptide (Lys-Gly) (interchain with G-Cter in SUMO2) cross-link. 4 consecutive C2H2-type zinc fingers follow at residues 475-497 (CPCD…YLIH), 503-525 (FGCN…EQTH), 625-647 (YRCS…YLIH), and 653-675 (FECS…QLTH). A Glycyl lysine isopeptide (Lys-Gly) (interchain with G-Cter in SUMO2) cross-link involves residue Lys-683.

This sequence belongs to the krueppel C2H2-type zinc-finger protein family.

Its subcellular location is the nucleus. Functionally, may be involved in transcriptional regulation. The sequence is that of Zinc finger protein 770 (ZNF770) from Homo sapiens (Human).